The following is a 111-amino-acid chain: Ribosome-binding factor A (111 aa).

Belongs to the RbfA family. As to quaternary structure, monomer. Binds 30S ribosomal subunits, but not 50S ribosomal subunits or 70S ribosomes.

It localises to the cytoplasm. Functionally, one of several proteins that assist in the late maturation steps of the functional core of the 30S ribosomal subunit. Associates with free 30S ribosomal subunits (but not with 30S subunits that are part of 70S ribosomes or polysomes). Required for efficient processing of 16S rRNA. May interact with the 5'-terminal helix region of 16S rRNA. The sequence is that of Ribosome-binding factor A from Helicobacter pylori (strain J99 / ATCC 700824) (Campylobacter pylori J99).